The chain runs to 777 residues: DNA ligase (777 aa).

NAD(+) is bound by residues 35–39, 84–85, and glutamate 116; these read DAEYD and SL. Residue lysine 118 is the N6-AMP-lysine intermediate of the active site. Residues arginine 139, glutamate 176, lysine 293, and lysine 317 each coordinate NAD(+). Zn(2+) contacts are provided by cysteine 411, cysteine 414, cysteine 429, and cysteine 435. One can recognise a BRCT domain in the interval 691 to 777; sequence MESQPLEGQT…NQHGIDPGAL (87 aa).

It belongs to the NAD-dependent DNA ligase family. LigA subfamily. Mg(2+) is required as a cofactor. Requires Mn(2+) as cofactor.

The enzyme catalyses NAD(+) + (deoxyribonucleotide)n-3'-hydroxyl + 5'-phospho-(deoxyribonucleotide)m = (deoxyribonucleotide)n+m + AMP + beta-nicotinamide D-nucleotide.. Functionally, DNA ligase that catalyzes the formation of phosphodiester linkages between 5'-phosphoryl and 3'-hydroxyl groups in double-stranded DNA using NAD as a coenzyme and as the energy source for the reaction. It is essential for DNA replication and repair of damaged DNA. The polypeptide is DNA ligase (Alcanivorax borkumensis (strain ATCC 700651 / DSM 11573 / NCIMB 13689 / SK2)).